We begin with the raw amino-acid sequence, 185 residues long: ATP synthase subunit delta (185 aa).

It belongs to the ATPase delta chain family. In terms of assembly, F-type ATPases have 2 components, F(1) - the catalytic core - and F(0) - the membrane proton channel. F(1) has five subunits: alpha(3), beta(3), gamma(1), delta(1), epsilon(1). CF(0) has four main subunits: a(1), b(1), b'(1) and c(10-14). The alpha and beta chains form an alternating ring which encloses part of the gamma chain. F(1) is attached to F(0) by a central stalk formed by the gamma and epsilon chains, while a peripheral stalk is formed by the delta, b and b' chains.

It localises to the cell inner membrane. Functionally, f(1)F(0) ATP synthase produces ATP from ADP in the presence of a proton or sodium gradient. F-type ATPases consist of two structural domains, F(1) containing the extramembraneous catalytic core and F(0) containing the membrane proton channel, linked together by a central stalk and a peripheral stalk. During catalysis, ATP synthesis in the catalytic domain of F(1) is coupled via a rotary mechanism of the central stalk subunits to proton translocation. In terms of biological role, this protein is part of the stalk that links CF(0) to CF(1). It either transmits conformational changes from CF(0) to CF(1) or is implicated in proton conduction. The polypeptide is ATP synthase subunit delta (Gloeobacter violaceus (strain ATCC 29082 / PCC 7421)).